Here is a 1509-residue protein sequence, read N- to C-terminus: ABC transporter G family member 38 (1509 aa).

Positions 196-467 constitute an ABC transporter 1 domain; it reads LGLVGLNFAK…FERCGFRCPE (272 aa). 229 to 236 is a binding site for ATP; it reads GPPSSGKT. Positions 545-758 constitute an ABC transmembrane type-2 1 domain; that stretch reads ELLKTSCSKE…AYIAFSSNEM (214 aa). The next 7 membrane-spanning stretches (helical) occupy residues 563 to 583, 598 to 618, 651 to 671, 682 to 702, 707 to 727, 733 to 753, and 791 to 811; these read FVYI…STVF, IYIG…FADL, IPSS…TMGF, LLVV…TAGL, VVTN…GGFI, IPKW…YIAF, and YWIA…LFSL. The region spanning 908 to 1160 is the ABC transporter 2 domain; that stretch reads MSFNEINYYV…KVVEYFEAIP (253 aa). 953-960 provides a ligand contact to ATP; sequence GVSGAGKT. The ABC transmembrane type-2 2 domain maps to 1233–1447; sequence NQFKLCLWKQ…TVYGLIVSQY (215 aa). Helical transmembrane passes span 1252–1272, 1284–1304, 1336–1356, 1367–1387, 1397–1417, 1425–1445, and 1478–1498; these read YNLV…TIFW, LLVI…ENSV, VVVE…IVYP, FFWF…YGMM, VASI…GFFI, WWVW…LIVS, and FMGV…FTYA.

This sequence belongs to the ABC transporter superfamily. ABCG family. PDR (TC 3.A.1.205) subfamily.

The protein resides in the membrane. In terms of biological role, may be a general defense protein. The protein is ABC transporter G family member 38 of Oryza sativa subsp. japonica (Rice).